Here is a 443-residue protein sequence, read N- to C-terminus: Tol-Pal system protein TolB (443 aa).

An N-terminal signal peptide occupies residues 1–31; it reads MTRLAKGKWRSTLGAMMALAVMVAAIPQARA. Residues 423 to 432 show a composition bias toward polar residues; that stretch reads NERQISTPTE. The disordered stretch occupies residues 423 to 443; that stretch reads NERQISTPTEASDPAWSPLLP.

This sequence belongs to the TolB family. The Tol-Pal system is composed of five core proteins: the inner membrane proteins TolA, TolQ and TolR, the periplasmic protein TolB and the outer membrane protein Pal. They form a network linking the inner and outer membranes and the peptidoglycan layer.

It localises to the periplasm. Functionally, part of the Tol-Pal system, which plays a role in outer membrane invagination during cell division and is important for maintaining outer membrane integrity. This chain is Tol-Pal system protein TolB, found in Rhodospirillum rubrum (strain ATCC 11170 / ATH 1.1.1 / DSM 467 / LMG 4362 / NCIMB 8255 / S1).